A 315-amino-acid chain; its full sequence is tRNA dimethylallyltransferase (315 aa).

10–17 is a binding site for ATP; that stretch reads GPTGVGKT. 12–17 serves as a coordination point for substrate; that stretch reads TGVGKT. The interval 35-38 is interaction with substrate tRNA; it reads DSMQ.

It belongs to the IPP transferase family. As to quaternary structure, monomer. The cofactor is Mg(2+).

It carries out the reaction adenosine(37) in tRNA + dimethylallyl diphosphate = N(6)-dimethylallyladenosine(37) in tRNA + diphosphate. Its function is as follows. Catalyzes the transfer of a dimethylallyl group onto the adenine at position 37 in tRNAs that read codons beginning with uridine, leading to the formation of N6-(dimethylallyl)adenosine (i(6)A). The polypeptide is tRNA dimethylallyltransferase (Thermodesulfovibrio yellowstonii (strain ATCC 51303 / DSM 11347 / YP87)).